A 272-amino-acid chain; its full sequence is Eukaryotic translation initiation factor 4E homolog (272 aa).

Residues 249-272 (GKLNSGRKPSNTRGGFSSFGNKRY) are disordered. Positions 255–272 (RKPSNTRGGFSSFGNKRY) are enriched in polar residues.

Belongs to the eukaryotic initiation factor 4E family.

In terms of biological role, recognizes and binds the 7-methylguanosine-containing mRNA cap during an early step in the initiation of protein synthesis and facilitates ribosome binding by inducing the unwinding of the mRNAs secondary structures. The chain is Eukaryotic translation initiation factor 4E homolog from Acanthamoeba polyphaga mimivirus (APMV).